The chain runs to 318 residues: DNA polymerase IV (318 aa).

The region spanning 6–186 (IIHIDMDAFY…LPLGKIPGVG (181 aa)) is the UmuC domain. Positions 10 and 104 each coordinate Mg(2+). Glutamate 105 is a catalytic residue.

Belongs to the DNA polymerase type-Y family. Monomer. Requires Mg(2+) as cofactor.

The protein localises to the cytoplasm. The enzyme catalyses DNA(n) + a 2'-deoxyribonucleoside 5'-triphosphate = DNA(n+1) + diphosphate. In terms of biological role, poorly processive, error-prone DNA polymerase involved in untargeted mutagenesis. Copies undamaged DNA at stalled replication forks, which arise in vivo from mismatched or misaligned primer ends. These misaligned primers can be extended by PolIV. Exhibits no 3'-5' exonuclease (proofreading) activity. May be involved in translesional synthesis, in conjunction with the beta clamp from PolIII. The protein is DNA polymerase IV of Neisseria meningitidis serogroup B (strain ATCC BAA-335 / MC58).